Here is a 620-residue protein sequence, read N- to C-terminus: DNA mismatch repair protein MutL (620 aa).

The disordered stretch occupies residues 332-402 (SELGLEAQPE…YRTPLRPATH (71 aa)). The segment covering 352–365 (SNSTNSNVSSTSYS) has biased composition (low complexity). Residues 378-394 (PLTTTATSYNQGQSSYR) are compositionally biased toward polar residues.

This sequence belongs to the DNA mismatch repair MutL/HexB family.

Its function is as follows. This protein is involved in the repair of mismatches in DNA. It is required for dam-dependent methyl-directed DNA mismatch repair. May act as a 'molecular matchmaker', a protein that promotes the formation of a stable complex between two or more DNA-binding proteins in an ATP-dependent manner without itself being part of a final effector complex. This Shewanella piezotolerans (strain WP3 / JCM 13877) protein is DNA mismatch repair protein MutL.